The sequence spans 217 residues: Ribosome maturation factor RimP (217 aa).

Belongs to the RimP family.

The protein localises to the cytoplasm. Functionally, required for maturation of 30S ribosomal subunits. The polypeptide is Ribosome maturation factor RimP (Nocardia farcinica (strain IFM 10152)).